The primary structure comprises 244 residues: N-(5'-phosphoribosyl)anthranilate isomerase 3, chloroplastic (244 aa).

The transit peptide at Met1–Ser32 directs the protein to the chloroplast.

The protein belongs to the TrpF family.

It is found in the plastid. It localises to the chloroplast. It catalyses the reaction N-(5-phospho-beta-D-ribosyl)anthranilate = 1-(2-carboxyphenylamino)-1-deoxy-D-ribulose 5-phosphate. The protein operates within amino-acid biosynthesis; L-tryptophan biosynthesis; L-tryptophan from chorismate: step 3/5. The polypeptide is N-(5'-phosphoribosyl)anthranilate isomerase 3, chloroplastic (PAI3) (Arabidopsis thaliana (Mouse-ear cress)).